A 270-amino-acid chain; its full sequence is Mediator of RNA polymerase II transcription subunit 4 (270 aa).

Residues 1-22 (MAASSSGEKEKERLGGGLGVAG) are disordered. Ala2 bears the N-acetylalanine mark. 2 coiled-coil regions span residues 24-48 (NSTR…IEML) and 90-131 (HHEM…AKEK). A Phosphoserine modification is found at Ser32. Positions 226–270 (DMSMNMLPPNHSSDFLLEPPGHNKENEDDVEIMSTDSSSSSSESD) are disordered. The segment covering 259-270 (STDSSSSSSESD) has biased composition (low complexity).

This sequence belongs to the Mediator complex subunit 4 family. Component of the Mediator complex, which is composed of MED1, MED4, MED6, MED7, MED8, MED9, MED10, MED11, MED12, MED13, MED13L, MED14, MED15, MED16, MED17, MED18, MED19, MED20, MED21, MED22, MED23, MED24, MED25, MED26, MED27, MED29, MED30, MED31, CCNC, CDK8 and CDC2L6/CDK11. The MED12, MED13, CCNC and CDK8 subunits form a distinct module termed the CDK8 module. Mediator containing the CDK8 module is less active than Mediator lacking this module in supporting transcriptional activation. Individual preparations of the Mediator complex lacking one or more distinct subunits have been variously termed ARC, CRSP, DRIP, PC2, SMCC and TRAP.

The protein localises to the nucleus. Functionally, component of the Mediator complex, a coactivator involved in the regulated transcription of nearly all RNA polymerase II-dependent genes. Mediator functions as a bridge to convey information from gene-specific regulatory proteins to the basal RNA polymerase II transcription machinery. Mediator is recruited to promoters by direct interactions with regulatory proteins and serves as a scaffold for the assembly of a functional preinitiation complex with RNA polymerase II and the general transcription factors. The polypeptide is Mediator of RNA polymerase II transcription subunit 4 (MED4) (Homo sapiens (Human)).